The sequence spans 269 residues: Cytochrome c oxidase subunit 3 (269 aa).

A run of 7 helical transmembrane segments spans residues 21–41 (PWPM…GLTA), 49–69 (MFML…FKDI), 90–110 (GFLM…WAFL), 132–152 (ISAA…GVTM), 167–187 (TLYG…FQGL), 205–225 (FFAL…MLAM), and 247–267 (ILYL…VYWW).

It belongs to the cytochrome c oxidase subunit 3 family. As to quaternary structure, component of the cytochrome c oxidase (complex IV, CIV), a multisubunit enzyme composed of a catalytic core of 3 subunits and several supernumerary subunits. The complex exists as a monomer or a dimer and forms supercomplexes (SCs) in the inner mitochondrial membrane with ubiquinol-cytochrome c oxidoreductase (cytochrome b-c1 complex, complex III, CIII).

The protein resides in the mitochondrion inner membrane. The catalysed reaction is 4 Fe(II)-[cytochrome c] + O2 + 8 H(+)(in) = 4 Fe(III)-[cytochrome c] + 2 H2O + 4 H(+)(out). In terms of biological role, component of the cytochrome c oxidase, the last enzyme in the mitochondrial electron transport chain which drives oxidative phosphorylation. The respiratory chain contains 3 multisubunit complexes succinate dehydrogenase (complex II, CII), ubiquinol-cytochrome c oxidoreductase (cytochrome b-c1 complex, complex III, CIII) and cytochrome c oxidase (complex IV, CIV), that cooperate to transfer electrons derived from NADH and succinate to molecular oxygen, creating an electrochemical gradient over the inner membrane that drives transmembrane transport and the ATP synthase. Cytochrome c oxidase is the component of the respiratory chain that catalyzes the reduction of oxygen to water. Electrons originating from reduced cytochrome c in the intermembrane space (IMS) are transferred via the dinuclear copper A center (CU(A)) of subunit 2 and heme A of subunit 1 to the active site in subunit 1, a binuclear center (BNC) formed by heme A3 and copper B (CU(B)). The BNC reduces molecular oxygen to 2 water molecules using 4 electrons from cytochrome c in the IMS and 4 protons from the mitochondrial matrix. The polypeptide is Cytochrome c oxidase subunit 3 (COX3) (Debaryomyces hansenii (strain ATCC 36239 / CBS 767 / BCRC 21394 / JCM 1990 / NBRC 0083 / IGC 2968) (Yeast)).